A 77-amino-acid polypeptide reads, in one-letter code: Large ribosomal subunit protein eL14 (77 aa).

It belongs to the eukaryotic ribosomal protein eL14 family.

This Methanococcus maripaludis (strain C6 / ATCC BAA-1332) protein is Large ribosomal subunit protein eL14.